The chain runs to 104 residues: Cell division protein FtsL (104 aa).

Over 1 to 19 (MSTPNTHLLCLIATDLRKH) the chain is Cytoplasmic. The chain crosses the membrane as a helical span at residues 20 to 39 (FFAVLVGMLIVCSAIYNVYT). The Periplasmic segment spans residues 40–104 (THKTRGLVTQ…KKNSVLVELR (65 aa)).

The protein belongs to the FtsL family. In terms of assembly, part of a complex composed of FtsB, FtsL and FtsQ.

Its subcellular location is the cell inner membrane. Its function is as follows. Essential cell division protein. May link together the upstream cell division proteins, which are predominantly cytoplasmic, with the downstream cell division proteins, which are predominantly periplasmic. The sequence is that of Cell division protein FtsL from Psychromonas ingrahamii (strain DSM 17664 / CCUG 51855 / 37).